A 116-amino-acid chain; its full sequence is Chondroitin proteoglycan 7 (116 aa).

An N-terminal signal peptide occupies residues 1–19; that stretch reads MQTITILALIACVAVPIFA. Residues 29 to 102 are disordered; that stretch reads DVVESSGEGS…NAVVASDSPK (74 aa). Low complexity-rich tracts occupy residues 32–41 and 48–58; these read ESSGEGSGES and VESSGEGSGES. O-linked (Xyl...) (chondroitin sulfate) serine glycosylation is found at S68, S72, S76, S84, and S88.

This chain is Chondroitin proteoglycan 7, found in Caenorhabditis elegans.